Reading from the N-terminus, the 305-residue chain is DNA-directed RNA polymerase 35 kDa subunit (305 aa).

It belongs to the poxviridae DNA-directed RNA polymerase 35 kDa subunit family. The DNA-dependent RNA polymerase used for intermediate and late genes expression consists of eight subunits 147 kDa, 133 kDa, 35 kDa, 30 kDa, 22 kDa, 19 kDa, 18 kDa and 7 kDa totalling more than 500 kDa in mass. The same holoenzyme, with the addition of the transcription-specificity factor RAP94, is used for early gene expression.

The protein resides in the virion. It carries out the reaction RNA(n) + a ribonucleoside 5'-triphosphate = RNA(n+1) + diphosphate. In terms of biological role, part of the DNA-dependent RNA polymerase which catalyzes the transcription of viral DNA into RNA using the four ribonucleoside triphosphates as substrates. Responsible for the transcription of early, intermediate and late genes. DNA-dependent RNA polymerase associates with the early transcription factor (ETF), itself composed of D6 and A7, thereby allowing the early genes transcription. Late transcription, and probably also intermediate transcription, require newly synthesized RNA polymerase. The protein is DNA-directed RNA polymerase 35 kDa subunit (OPG156) of Cynomys gunnisoni (Gunnison's prairie dog).